The chain runs to 353 residues: GTPase Obg (353 aa).

The region spanning 1 to 159 is the Obg domain; the sequence is MKFVDEVRIH…RDLVLELKLL (159 aa). The 174-residue stretch at 160-333 folds into the OBG-type G domain; sequence ADVGIVGYPN…LMDAVGRALY (174 aa). GTP-binding positions include 166–173, 191–195, 212–215, 283–286, and 314–316; these read GYPNAGKS, FTTLV, DIPG, TKID, and SAV. 2 residues coordinate Mg(2+): S173 and T193.

The protein belongs to the TRAFAC class OBG-HflX-like GTPase superfamily. OBG GTPase family. Monomer. It depends on Mg(2+) as a cofactor.

It localises to the cytoplasm. Its function is as follows. An essential GTPase which binds GTP, GDP and possibly (p)ppGpp with moderate affinity, with high nucleotide exchange rates and a fairly low GTP hydrolysis rate. Plays a role in control of the cell cycle, stress response, ribosome biogenesis and in those bacteria that undergo differentiation, in morphogenesis control. The protein is GTPase Obg of Anaeromyxobacter sp. (strain Fw109-5).